A 253-amino-acid chain; its full sequence is Phycoerythrobilin:ferredoxin oxidoreductase (253 aa).

It belongs to the HY2 family.

The catalysed reaction is (3Z)-phycoerythrobilin + oxidized 2[4Fe-4S]-[ferredoxin] = 15,16-dihydrobiliverdin + reduced 2[4Fe-4S]-[ferredoxin] + 2 H(+). Its function is as follows. Catalyzes the two-electron reduction of the C2 and C3(1) diene system of 15,16-dihydrobiliverdin. In Prochlorococcus marinus (strain MIT 9215), this protein is Phycoerythrobilin:ferredoxin oxidoreductase (pebB).